The chain runs to 263 residues: MKRICSVSSVQLFSRSFRALASPRSLNYPLQCIKRSSVRMESSNFSSGVRTESSVKPRGALIVLEGLDRSGKSTQCAKLLSFLNGLGHPTELWRFPDRETSVGQMISAYLSNKSQLDDHTIHLLFSANRWEKRSLMEEKLKTGTTLIVDRYSYSGVAFSSAKGLDIEWCKAPEIGLLAPDSVLYLDISPERAAERGGYGDERYERVEFQKKVADFYQTLGDSSWKIINASDAMEEVEKKIQQVVLDQVKECTEGKPLSLLWSS.

The N-terminal 51 residues, 1–51 (MKRICSVSSVQLFSRSFRALASPRSLNYPLQCIKRSSVRMESSNFSSGVRT), are a transit peptide targeting the mitochondrion. An ATP-binding site is contributed by 66-74 (GLDRSGKST).

Belongs to the thymidylate kinase family. As to expression, expressed in root, rosette leaves, flower buds, flowers and siliques.

The protein resides in the mitochondrion. Its subcellular location is the cytoplasm. The protein localises to the nucleus. It is found in the nucleoplasm. It catalyses the reaction dTMP + ATP = dTDP + ADP. The protein operates within pyrimidine metabolism; dTTP biosynthesis. In terms of biological role, catalyzes the conversion of dTMP to dTDP. Involved in the regulation of DNA replication. Is essential to promote the first division of the zygote. The polypeptide is Thymidylate kinase (Arabidopsis thaliana (Mouse-ear cress)).